Consider the following 328-residue polypeptide: D-cysteine desulfhydrase (328 aa).

Lys-51 carries the post-translational modification N6-(pyridoxal phosphate)lysine.

Belongs to the ACC deaminase/D-cysteine desulfhydrase family. Homodimer. It depends on pyridoxal 5'-phosphate as a cofactor.

It catalyses the reaction D-cysteine + H2O = hydrogen sulfide + pyruvate + NH4(+) + H(+). Its function is as follows. Catalyzes the alpha,beta-elimination reaction of D-cysteine and of several D-cysteine derivatives. It could be a defense mechanism against D-cysteine. This Salmonella paratyphi A (strain AKU_12601) protein is D-cysteine desulfhydrase.